Consider the following 194-residue polypeptide: Small ribosomal subunit protein uS4c (194 aa).

An S4 RNA-binding domain is found at 84-144 (MRLDTLLYRT…KEILKSLNDK (61 aa)).

The protein belongs to the universal ribosomal protein uS4 family. As to quaternary structure, part of the 30S ribosomal subunit. Contacts protein S5. The interaction surface between S4 and S5 is involved in control of translational fidelity.

The protein resides in the plastid. It localises to the chloroplast. Functionally, one of the primary rRNA binding proteins, it binds directly to 16S rRNA where it nucleates assembly of the body of the 30S subunit. Its function is as follows. With S5 and S12 plays an important role in translational accuracy. The protein is Small ribosomal subunit protein uS4c (rps4) of Bigelowiella natans (Pedinomonas minutissima).